Consider the following 268-residue polypeptide: Hydroxypyruvate/pyruvate aldolase (268 aa).

The active-site Proton acceptor is the histidine 48. 2 residues coordinate a divalent metal cation: glutamate 152 and aspartate 178.

The protein belongs to the HpcH/HpaI aldolase family. Mn(2+) serves as cofactor. Mg(2+) is required as a cofactor. It depends on Co(2+) as a cofactor.

The enzyme catalyses D-glyceraldehyde + 3-hydroxypyruvate = (3R,4S,5R)-3,4,5,6-tetrahydroxy-2-oxohexanoate. The catalysed reaction is D-glyceraldehyde + 3-hydroxypyruvate = 2-dehydro-D-gluconate. It carries out the reaction D-glyceraldehyde + 3-hydroxypyruvate = 2-dehydro-D-galactonate. It catalyses the reaction D-glyceraldehyde + pyruvate = 2-dehydro-3-deoxy-L-galactonate. The enzyme catalyses 2-dehydro-3-deoxy-D-gluconate = D-glyceraldehyde + pyruvate. Aldolase which can catalyze in vitro the aldolisation reaction between hydroxypyruvate (HPA) or pyruvate (PA) and D-glyceraldehyde (D-GA). The condensation of hydroxypyruvate and D-glyceraldehyde produces (3R,4S,5R)-3,4,5,6-tetrahydroxy-2-oxohexanoate as the major product, 2-dehydro-D-gluconate and 2-dehydro-D-galactonate. The condensation of pyruvate and D-glyceraldehyde produces 2-dehydro-3-deoxy-L-galactonate as the major product and 2-dehydro-3-deoxy-D-gluconate. Also catalyzes the retro-aldol type decarboxylation of oxaloacetate, a general property of known pyruvate aldolases. The protein is Hydroxypyruvate/pyruvate aldolase of Pseudomonas aeruginosa.